A 434-amino-acid polypeptide reads, in one-letter code: RNA polymerase II holoenzyme cyclin-like subunit (434 aa).

Residues 23–155 (EARRRVLLLE…LIEEMDSYLL (133 aa)) enclose the Cyclin N-terminal domain. Residues 248-278 (GSSTNPININNNNNTNTSNNNGTTSTTTTTT) show a composition bias toward low complexity. 3 disordered regions span residues 248-292 (GSST…DNTE), 301-320 (LTKS…DIDN), and 330-362 (QIQN…GQIS). A compositionally biased stretch (low complexity) spans 330–359 (QIQNQTQHQHQESTHNNTSSTNTGRNGING).

The protein belongs to the cyclin family. Cyclin C subfamily. In terms of assembly, component of the SRB8-11 complex, a regulatory module of the Mediator complex.

Its subcellular location is the nucleus. Its function is as follows. Component of the SRB8-11 complex. The SRB8-11 complex is a regulatory module of the Mediator complex which is itself involved in regulation of basal and activated RNA polymerase II-dependent transcription. The SRB8-11 complex may be involved in the transcriptional repression of a subset of genes regulated by Mediator. It may inhibit the association of the Mediator complex with RNA polymerase II to form the holoenzyme complex. The SRB8-11 complex phosphorylates the C-terminal domain (CTD) of the largest subunit of RNA polymerase II. The polypeptide is RNA polymerase II holoenzyme cyclin-like subunit (SSN8) (Candida albicans (strain SC5314 / ATCC MYA-2876) (Yeast)).